The primary structure comprises 441 residues: Probable cyclic di-GMP phosphodiesterase VC_1348 (441 aa).

The Response regulatory domain occupies 72–187; that stretch reads TILIVDDSPD…LLKSRVHTHL (116 aa). At Asp-120 the chain carries 4-aspartylphosphate. In terms of domain architecture, HD-GYP spans 214–425; it reads LDRMQDAVVF…FIDIAQKFAD (212 aa).

It carries out the reaction 3',3'-c-di-GMP + 2 H2O = 2 GMP + 2 H(+). Functionally, probable phosphodiesterase (PDE) that catalyzes the hydrolysis of cyclic diguanylate (c-di-GMP). Increases motility and decreases biofilm formation in vivo. This chain is Probable cyclic di-GMP phosphodiesterase VC_1348, found in Vibrio cholerae serotype O1 (strain ATCC 39315 / El Tor Inaba N16961).